Consider the following 505-residue polypeptide: Apolipoprotein N-acyltransferase (505 aa).

Transmembrane regions (helical) follow at residues 26-46 (FAPY…LILL), 66-86 (FATG…MPLI), 89-109 (LFLM…FAWL), 129-149 (LWLI…WLWL), 161-181 (FAPI…AGAL), and 186-206 (IHKQ…GFGI). One can recognise a CN hydrolase domain in the interval 225 to 471 (IQGNVDQNLK…TAVLRAELTP (247 aa)). Catalysis depends on E264, which acts as the Proton acceptor. The active site involves K330. The active-site Nucleophile is C382. The helical transmembrane segment at 481–501 (FGTWPLYFWVALSLMLAWWLP) threads the bilayer.

This sequence belongs to the CN hydrolase family. Apolipoprotein N-acyltransferase subfamily.

Its subcellular location is the cell inner membrane. It carries out the reaction N-terminal S-1,2-diacyl-sn-glyceryl-L-cysteinyl-[lipoprotein] + a glycerophospholipid = N-acyl-S-1,2-diacyl-sn-glyceryl-L-cysteinyl-[lipoprotein] + a 2-acyl-sn-glycero-3-phospholipid + H(+). It participates in protein modification; lipoprotein biosynthesis (N-acyl transfer). Functionally, catalyzes the phospholipid dependent N-acylation of the N-terminal cysteine of apolipoprotein, the last step in lipoprotein maturation. This chain is Apolipoprotein N-acyltransferase, found in Vibrio parahaemolyticus serotype O3:K6 (strain RIMD 2210633).